Here is a 414-residue protein sequence, read N- to C-terminus: Probable acetyl-CoA acetyltransferase (414 aa).

The active-site Acyl-thioester intermediate is Cys-110. CoA contacts are provided by residues Tyr-205, 244-246, and Lys-249; that span reads KVL. Tyr-205 contacts K(+). K(+) contacts are provided by Ala-266 and Ala-268. Ser-269 serves as a coordination point for CoA. Val-366 lines the K(+) pocket. Active-site proton acceptor residues include His-370 and Cys-400.

It belongs to the thiolase-like superfamily. Thiolase family.

The catalysed reaction is 2 acetyl-CoA = acetoacetyl-CoA + CoA. The polypeptide is Probable acetyl-CoA acetyltransferase (Dictyostelium discoideum (Social amoeba)).